Here is a 276-residue protein sequence, read N- to C-terminus: Pantothenate synthetase (276 aa).

An ATP-binding site is contributed by 27-34 (MGNLHDGH). His34 serves as the catalytic Proton donor. Residue Gln58 participates in (R)-pantoate binding. Gln58 contacts beta-alanine. ATP is bound at residue 145–148 (GKKD). Residue Gln151 participates in (R)-pantoate binding. ATP is bound by residues Ile174 and 182–185 (LSSR).

Belongs to the pantothenate synthetase family. As to quaternary structure, homodimer.

Its subcellular location is the cytoplasm. It catalyses the reaction (R)-pantoate + beta-alanine + ATP = (R)-pantothenate + AMP + diphosphate + H(+). It functions in the pathway cofactor biosynthesis; (R)-pantothenate biosynthesis; (R)-pantothenate from (R)-pantoate and beta-alanine: step 1/1. Catalyzes the condensation of pantoate with beta-alanine in an ATP-dependent reaction via a pantoyl-adenylate intermediate. This chain is Pantothenate synthetase, found in Aromatoleum aromaticum (strain DSM 19018 / LMG 30748 / EbN1) (Azoarcus sp. (strain EbN1)).